We begin with the raw amino-acid sequence, 328 residues long: DNA-directed RNA polymerase subunit alpha (328 aa).

An alpha N-terminal domain (alpha-NTD) region spans residues Met1–Ser231. Residues Asp247–Gly328 are alpha C-terminal domain (alpha-CTD).

Belongs to the RNA polymerase alpha chain family. Homodimer. The RNAP catalytic core consists of 2 alpha, 1 beta, 1 beta' and 1 omega subunit. When a sigma factor is associated with the core the holoenzyme is formed, which can initiate transcription.

It catalyses the reaction RNA(n) + a ribonucleoside 5'-triphosphate = RNA(n+1) + diphosphate. DNA-dependent RNA polymerase catalyzes the transcription of DNA into RNA using the four ribonucleoside triphosphates as substrates. The polypeptide is DNA-directed RNA polymerase subunit alpha (Chlorobium luteolum (strain DSM 273 / BCRC 81028 / 2530) (Pelodictyon luteolum)).